Here is a 321-residue protein sequence, read N- to C-terminus: NADPH-dependent codeinone reductase 1-4 (321 aa).

NADPH is bound by residues T27 and D51. Active-site proton donor residues include Y56 and H119. H119 serves as a coordination point for substrate. Residues S165, Q187, S214, L216, S264, and R269 each contribute to the NADPH site. A disordered region spans residues 299–321; sequence SADFLLSPTGPFKTEEEFWDEKD.

It belongs to the aldo/keto reductase family. As to expression, latex secreting cells (laticifer cells). Expressed constitutively in all organs with highest levels in capsules. Restricted to the parietal region of sieve elements adjacent or proximal to laticifers in roots, stems, leaves and carpels.

The protein localises to the cytoplasm. The protein resides in the cytosol. The enzyme catalyses codeine + NADP(+) = codeinone + NADPH + H(+). It catalyses the reaction neopine + NADP(+) = neopinone + NADPH + H(+). The catalysed reaction is morphine + NADP(+) = morphinone + NADPH + H(+). It carries out the reaction neomorphine + NADP(+) = neomorphinone + NADPH + H(+). Its pathway is alkaloid biosynthesis; morphine biosynthesis. Functionally, NADPH-dependent codeinone reductase involved in biosynthesis of morphinan-type benzylisoquinoline and opiate alkaloids natural products. Reduces codeinone to codeine in the penultimate step in morphine biosynthesis. Can use morphinone, hydrocodone and hydromorphone as substrate during reductive reaction with NADPH as cofactor, and morphine and dihydrocodeine as substrate during oxidative reaction with NADP as cofactor. Converts morphinone to morphine, and neomorphinone to neomorphine. Reduces irreversibly neopinone, a spontaneous isomer of codeinone, to neopine; in planta, neopine levels are limited to low levels. In Papaver somniferum (Opium poppy), this protein is NADPH-dependent codeinone reductase 1-4.